The primary structure comprises 570 residues: GTPase Obg (570 aa).

Residues 2–168 enclose the Obg domain; it reads SDFVDRVTVH…RDIILELKSI (167 aa). The tract at residues 15-43 is disordered; the sequence is GDGGNGSAGIRREKYKPLAGPNGGNGGKG. The region spanning 169–349 is the OBG-type G domain; it reads ADVALVGFPS…LNFALAKLVK (181 aa). Residues 175–182, 200–204, 221–224, 301–304, and 330–332 contribute to the GTP site; these read GFPSAGKS, FTTLV, DVPG, NKID, and STA. Mg(2+) is bound by residues serine 182 and threonine 202. The OCT domain occupies 382–468; it reads GRNAQVREFE…ERAVAFDWDP (87 aa). Positions 521–570 are disordered; it reads RAAMQAERAAGHWADPSIDDDRHDEQSLFGRGEVEEYEDEPGADGSRQLD.

This sequence belongs to the TRAFAC class OBG-HflX-like GTPase superfamily. OBG GTPase family. As to quaternary structure, monomer. The cofactor is Mg(2+).

The protein resides in the cytoplasm. Functionally, an essential GTPase which binds GTP, GDP and possibly (p)ppGpp with moderate affinity, with high nucleotide exchange rates and a fairly low GTP hydrolysis rate. Plays a role in control of the cell cycle, stress response, ribosome biogenesis and in those bacteria that undergo differentiation, in morphogenesis control. This chain is GTPase Obg, found in Bifidobacterium animalis subsp. lactis (strain AD011).